The chain runs to 67 residues: Theromin (67 aa).

The region spanning 2–27 (CENTECPRACPGEYEFDEDGCNTCVC) is the Antistasin-like domain.

As to quaternary structure, homodimer. Post-translationally, eight disulfide bonds are present.

The protein localises to the secreted. Potent thrombin-specific inhibitor. In Theromyzon tessulatum (Duck leech), this protein is Theromin.